The sequence spans 340 residues: SH2 domain-containing adapter protein D (340 aa).

Disordered stretches follow at residues 1–77, 94–186, and 198–230; these read MAKW…PKHR, GGPG…QPWE, and VQFD…ERVD. A compositionally biased stretch (acidic residues) spans 98–108; sequence EELEADTEYLD. Positions 171–186 are enriched in basic and acidic residues; sequence PQEDERPADEYDQPWE. One can recognise an SH2 domain in the interval 240-335; the sequence is WFHGPLNRAD…AEHLALLYPV (96 aa).

In terms of processing, tyrosine phosphorylated by ABL.

In terms of biological role, may function as an adapter protein. The chain is SH2 domain-containing adapter protein D (SHD) from Homo sapiens (Human).